A 378-amino-acid chain; its full sequence is 3-dehydroquinate synthase (378 aa).

Residues 115–119 (GVVGD), 139–140 (TS), lysine 152, and lysine 161 each bind NAD(+). Zn(2+)-binding residues include glutamate 194, histidine 256, and histidine 275.

It belongs to the sugar phosphate cyclases superfamily. Dehydroquinate synthase family. Requires Co(2+) as cofactor. Zn(2+) serves as cofactor. It depends on NAD(+) as a cofactor.

It is found in the cytoplasm. It catalyses the reaction 7-phospho-2-dehydro-3-deoxy-D-arabino-heptonate = 3-dehydroquinate + phosphate. It participates in metabolic intermediate biosynthesis; chorismate biosynthesis; chorismate from D-erythrose 4-phosphate and phosphoenolpyruvate: step 2/7. Catalyzes the conversion of 3-deoxy-D-arabino-heptulosonate 7-phosphate (DAHP) to dehydroquinate (DHQ). The polypeptide is 3-dehydroquinate synthase (Brucella suis (strain ATCC 23445 / NCTC 10510)).